The sequence spans 126 residues: MFS14 protein (126 aa).

The segment at residues 1 to 23 (MALEAATAPRALLAACLVLLVLG) is a signal peptide (or 24, or 26).

As to expression, enhanced expression in male flowers. Accumulates in the tapetum.

In Zea mays (Maize), this protein is MFS14 protein (MFS14).